A 427-amino-acid polypeptide reads, in one-letter code: MTVETSQTPSAAIDSDRWPAVAKVPRGPLAAASAAIANRLLRRTATHLPLRLVYSDGTATGAADPRAPSLFIHRPDALARRIGRHGLIGFGESYMAGEWSSKELTRVLTVLAGSVDELVPRSLHWLRPITPTFRPSWPDHSRDQARRNIAVHYDLSNDLFAAFLDETMTYSCAMFTDLLAQPTPAWTELAAAQRRKIDRLLDVAGVQQGSHVLEIGTGWGELCIRAAARGAHIRSVTLSVEQQRLARQRVAAAGFGHRVEIDLCDYRDVDGQYDSVVSVEMIEAVGYRSWPRYFAALEQLVRPGGPVAIQAITMPHHRMLATRHTQTWIQKYIFPGGLLPSTQAIIDITGQHTGLRIVDAASLRPHYAETLRLWRERFMQRRDGLAHLGFDEVFARMWELYLAYSEAGFRSGYLDVYQWTLIREGPP.

Belongs to the CFA/CMAS family.

The protein operates within lipid metabolism; fatty acid biosynthesis. With respect to regulation, inhibited by S-adenosyl-L-homocysteine. Involved in the biosynthesis of the tuberculostearic acid (10-methylstearic-acid or TSA), a constituent lipid of the mycobacterial cell wall. Catalyzes the transfer of the methyl group from S-adenosyl-L-methionine (SAM) to the double bond of oleic acid in phosphatidylethanolamine or phosphatidylcholine to produce TSA. The polypeptide is Tuberculostearic acid methyltransferase UfaA1 (Mycobacterium tuberculosis (strain ATCC 25618 / H37Rv)).